A 215-amino-acid chain; its full sequence is Ion-translocating oxidoreductase complex subunit G (215 aa).

The helical transmembrane segment at 9–29 (GLLLSGFALICTAAVALVNEA) threads the bilayer. FMN phosphoryl threonine is present on T176.

Belongs to the RnfG family. As to quaternary structure, the complex is composed of six subunits: RnfA, RnfB, RnfC, RnfD, RnfE and RnfG. The cofactor is FMN.

It is found in the cell inner membrane. Its function is as follows. Part of a membrane-bound complex that couples electron transfer with translocation of ions across the membrane. This Shewanella amazonensis (strain ATCC BAA-1098 / SB2B) protein is Ion-translocating oxidoreductase complex subunit G.